A 166-amino-acid polypeptide reads, in one-letter code: Large ribosomal subunit protein uL10 (166 aa).

This sequence belongs to the universal ribosomal protein uL10 family. Part of the ribosomal stalk of the 50S ribosomal subunit. The N-terminus interacts with L11 and the large rRNA to form the base of the stalk. The C-terminus forms an elongated spine to which L12 dimers bind in a sequential fashion forming a multimeric L10(L12)X complex.

Functionally, forms part of the ribosomal stalk, playing a central role in the interaction of the ribosome with GTP-bound translation factors. The chain is Large ribosomal subunit protein uL10 from Enterococcus faecalis (strain ATCC 700802 / V583).